Here is a 524-residue protein sequence, read N- to C-terminus: GMP synthase [glutamine-hydrolyzing] (524 aa).

One can recognise a Glutamine amidotransferase type-1 domain in the interval 8 to 206; it reads KILILDFGSQ…VRKLCQCEAR (199 aa). Catalysis depends on Cys-85, which acts as the Nucleophile. Residues His-180 and Glu-182 contribute to the active site. In terms of domain architecture, GMPS ATP-PPase spans 207 to 399; sequence WTTGNIVEDA…LGLPYEMVYR (193 aa). Residue 234–240 participates in ATP binding; it reads SGGVDSS.

As to quaternary structure, homodimer.

It carries out the reaction XMP + L-glutamine + ATP + H2O = GMP + L-glutamate + AMP + diphosphate + 2 H(+). The protein operates within purine metabolism; GMP biosynthesis; GMP from XMP (L-Gln route): step 1/1. In terms of biological role, catalyzes the synthesis of GMP from XMP. This chain is GMP synthase [glutamine-hydrolyzing], found in Methylococcus capsulatus (strain ATCC 33009 / NCIMB 11132 / Bath).